The sequence spans 198 residues: Dephospho-CoA kinase (198 aa).

Residues 3 to 198 enclose the DPCK domain; it reads VVGLTGGIGA…HRRYSLLAAA (196 aa). 11 to 16 lines the ATP pocket; it reads GAGKST.

The protein belongs to the CoaE family.

Its subcellular location is the cytoplasm. It carries out the reaction 3'-dephospho-CoA + ATP = ADP + CoA + H(+). It participates in cofactor biosynthesis; coenzyme A biosynthesis; CoA from (R)-pantothenate: step 5/5. Its function is as follows. Catalyzes the phosphorylation of the 3'-hydroxyl group of dephosphocoenzyme A to form coenzyme A. This is Dephospho-CoA kinase from Methylococcus capsulatus (strain ATCC 33009 / NCIMB 11132 / Bath).